A 209-amino-acid polypeptide reads, in one-letter code: Superoxide dismutase [Mn/Fe] (209 aa).

Fe(3+)-binding residues include histidine 38, histidine 90, aspartate 172, and histidine 176. Positions 38, 90, 172, and 176 each coordinate Mn(2+).

This sequence belongs to the iron/manganese superoxide dismutase family. Requires Mn(2+) as cofactor. Fe(3+) serves as cofactor.

The catalysed reaction is 2 superoxide + 2 H(+) = H2O2 + O2. In terms of biological role, destroys superoxide anion radicals which are normally produced within the cells and which are toxic to biological systems. Catalyzes the dismutation of superoxide anion radicals into O2 and H2O2 by successive reduction and oxidation of the transition metal ion at the active site. The polypeptide is Superoxide dismutase [Mn/Fe] (sodB) (Rickettsia prowazekii (strain Madrid E)).